The primary structure comprises 230 residues: Protein FAM3A (230 aa).

The signal sequence occupies residues 1 to 33; sequence MRLAGPLRIVALIIIMGLTWILVTILLGGPGVG. Intrachain disulfides connect Cys-59–Cys-87 and Cys-65–Cys-222. The 159-residue stretch at 68 to 226 folds into the GG-type lectin domain; it reads EHLSFRIVSG…LEMEGCIPRR (159 aa).

The protein belongs to the FAM3 family.

Its subcellular location is the secreted. The polypeptide is Protein FAM3A (Fam3a) (Mus musculus (Mouse)).